The following is a 58-amino-acid chain: Preprotein translocase subunit SecG (58 aa).

Residues 1-32 (MARKRRKGGEGLVTAIGLVRFYEEVEEKIKVP) are Cytoplasmic-facing. A helical transmembrane segment spans residues 33–54 (PEAVIGAAFALSIMTIALDLLL). Over 55 to 58 (KAAR) the chain is Extracellular.

Belongs to the SEC61-beta family. As to quaternary structure, component of the protein translocase complex. Heterotrimer consisting of alpha (SecY), beta (SecG) and gamma (SecE) subunits. Can form oligomers of the heterotrimer.

The protein localises to the cell membrane. Its function is as follows. Involved in protein export. The function of the beta subunit is unknown, but it may be involved in stabilization of the trimeric complex. The protein is Preprotein translocase subunit SecG of Ignicoccus hospitalis (strain KIN4/I / DSM 18386 / JCM 14125).